We begin with the raw amino-acid sequence, 162 residues long: NADH-quinone oxidoreductase subunit I (162 aa).

2 4Fe-4S ferredoxin-type domains span residues 53–83 (LRRY…IESE) and 93–122 (TRYD…ETHI). [4Fe-4S] cluster is bound by residues C63, C66, C69, C73, C102, C105, C108, and C112.

This sequence belongs to the complex I 23 kDa subunit family. NDH-1 is composed of 14 different subunits. Subunits NuoA, H, J, K, L, M, N constitute the membrane sector of the complex. [4Fe-4S] cluster is required as a cofactor.

The protein localises to the cell inner membrane. The enzyme catalyses a quinone + NADH + 5 H(+)(in) = a quinol + NAD(+) + 4 H(+)(out). NDH-1 shuttles electrons from NADH, via FMN and iron-sulfur (Fe-S) centers, to quinones in the respiratory chain. The immediate electron acceptor for the enzyme in this species is believed to be ubiquinone. Couples the redox reaction to proton translocation (for every two electrons transferred, four hydrogen ions are translocated across the cytoplasmic membrane), and thus conserves the redox energy in a proton gradient. The sequence is that of NADH-quinone oxidoreductase subunit I from Bordetella bronchiseptica (strain ATCC BAA-588 / NCTC 13252 / RB50) (Alcaligenes bronchisepticus).